The sequence spans 335 residues: UPF0284 protein TK0853 (335 aa).

It belongs to the UPF0284 family.

This is UPF0284 protein TK0853 from Thermococcus kodakarensis (strain ATCC BAA-918 / JCM 12380 / KOD1) (Pyrococcus kodakaraensis (strain KOD1)).